A 481-amino-acid polypeptide reads, in one-letter code: MARGLALILFSLLMVFGSAAHAEDDPIAALIQLNKQMIKSVKDGDMDSAQQTFDTFKAKWKKEEPSIKKENLSSHSEMDANIAMISLSFINQDARKLKTQLEELASHLETYQQAVVLKKTSSGQSRASLTAYIQSLKDTKQFIEKKQLDEASSAIDNLVTSWLAVEGDVVSQSKEAYTTSEENLALMKAEIGSHPEKVSKQIDEMIQLLEPIASSSYSWWDAALIPVREGMEALLVIGALLTMTKKARVTRSSTWIWGGASAGMAVSLAAGIGVTVLFSSSVFGENNFLLGGVTGVLSAVMLLYVGVWLHRNASMDKWREKINIQKSQALKKRSLLSFALIAFLAVVREGLETVIFFIGLVGKLPLTELIGGTAAGLIVLVIVGVLMIKLGMRIPLKPFFLLSMAVVLYMCVKFLGTGVHSLQLAGILPSDAESWLPSVSVLGIYPSVYSTIPQMLILLFLLIALVSEAAKHFTNGKELTK.

Positions 1 to 22 (MARGLALILFSLLMVFGSAAHA) are cleaved as a signal peptide. A run of 6 helical transmembrane segments spans residues 258 to 278 (GGAS…TVLF), 288 to 308 (FLLG…VGVW), 338 to 358 (FALI…IFFI), 368 to 388 (ELIG…VLMI), 399 to 419 (FFLL…GTGV), and 446 to 466 (PSVY…IALV).

Belongs to the oxidase-dependent Fe transporter (OFeT) (TC 9.A.10.1) family. Component of the iron transporter efeUOB/M complex composed of EfeU, EfeM and EfeB; EfeU is essential for the complex formation.

The protein resides in the cell membrane. Functionally, part of the iron transporter system efeUOB/M involved in iron import. Mediates the uptake of Fe(3+) ions, delivered by EfeM, across the cell membrane. In Bacillus subtilis (strain 168), this protein is Iron permease EfeU (efeU).